The primary structure comprises 551 residues: Cu(2+) suppressing and bleomycin sensitive protein 1 (551 aa).

2 coiled-coil regions span residues 174-213 and 249-300; these read REID…EEID and NSLL…DSGK. The tract at residues 513–551 is disordered; that stretch reads EEKAQNSTSSDGSDDDDNGESGIDSNSNDSEPESEYQQE. Residues 532 to 541 show a composition bias toward low complexity; it reads ESGIDSNSND. Acidic residues predominate over residues 542–551; the sequence is SEPESEYQQE.

Belongs to the CUB1 family. Monomer. Post-translationally, phosphorylated by PKA in vitro.

It is found in the cytoplasm. The protein localises to the nucleus. In terms of biological role, involved in bleomycin tolerance with links to DNA repair and/or proteasome function. The polypeptide is Cu(2+) suppressing and bleomycin sensitive protein 1 (CUB1) (Saccharomyces cerevisiae (strain ATCC 204508 / S288c) (Baker's yeast)).